The sequence spans 312 residues: Glycerol-3-phosphate dehydrogenase [NAD(P)+] (312 aa).

Residues Trp-11, Arg-30, Arg-31, and Lys-95 each coordinate NADPH. Sn-glycerol 3-phosphate is bound by residues Lys-95, Gly-123, and Ser-125. Ala-127 contacts NADPH. Positions 177, 230, 240, 241, and 242 each coordinate sn-glycerol 3-phosphate. Lys-177 (proton acceptor) is an active-site residue. Arg-241 contacts NADPH. NADPH contacts are provided by Val-265 and Glu-267.

It belongs to the NAD-dependent glycerol-3-phosphate dehydrogenase family.

Its subcellular location is the cytoplasm. It catalyses the reaction sn-glycerol 3-phosphate + NAD(+) = dihydroxyacetone phosphate + NADH + H(+). The enzyme catalyses sn-glycerol 3-phosphate + NADP(+) = dihydroxyacetone phosphate + NADPH + H(+). Its pathway is membrane lipid metabolism; glycerophospholipid metabolism. Catalyzes the reduction of the glycolytic intermediate dihydroxyacetone phosphate (DHAP) to sn-glycerol 3-phosphate (G3P), the key precursor for phospholipid synthesis. The polypeptide is Glycerol-3-phosphate dehydrogenase [NAD(P)+] (Helicobacter pylori (strain P12)).